The primary structure comprises 90 residues: DNA-binding protein HU-beta (90 aa).

This sequence belongs to the bacterial histone-like protein family. In terms of assembly, heterodimer of an alpha and a beta chain.

Histone-like DNA-binding protein which is capable of wrapping DNA to stabilize it, and thus to prevent its denaturation under extreme environmental conditions. This is DNA-binding protein HU-beta (hupB) from Pseudomonas aeruginosa (strain ATCC 15692 / DSM 22644 / CIP 104116 / JCM 14847 / LMG 12228 / 1C / PRS 101 / PAO1).